Reading from the N-terminus, the 216-residue chain is Putative holocytochrome-c1 synthase (216 aa).

Positions 1-46 (MQPEQLNQEEESKCPVPPEVRDAWLKSHGGKKPSEVHDTPHPTMLP) are disordered.

The protein belongs to the cytochrome c-type heme lyase family.

The protein localises to the mitochondrion inner membrane. It catalyses the reaction holo-[cytochrome c] = apo-[cytochrome c] + heme b. Functionally, lyase that catalyzes the covalent linking of the heme group to the cytochrome C1 apoprotein to produce the mature functional cytochrome. The protein is Putative holocytochrome-c1 synthase of Schizosaccharomyces pombe (strain 972 / ATCC 24843) (Fission yeast).